Reading from the N-terminus, the 96-residue chain is uncharacterized protein (96 aa).

This is an uncharacterized protein from Methanocaldococcus jannaschii (strain ATCC 43067 / DSM 2661 / JAL-1 / JCM 10045 / NBRC 100440) (Methanococcus jannaschii).